The following is a 132-amino-acid chain: Small ribosomal subunit protein uS11c (132 aa).

This sequence belongs to the universal ribosomal protein uS11 family. Part of the 30S ribosomal subunit.

It is found in the plastid. The protein localises to the chloroplast. This is Small ribosomal subunit protein uS11c from Cryptomeria japonica (Japanese cedar).